The primary structure comprises 59 residues: Large ribosomal subunit protein bL32 (59 aa).

Belongs to the bacterial ribosomal protein bL32 family.

This chain is Large ribosomal subunit protein bL32, found in Malacoplasma penetrans (strain HF-2) (Mycoplasma penetrans).